The sequence spans 313 residues: Protoheme IX farnesyltransferase (313 aa).

8 consecutive transmembrane segments (helical) span residues 34–54 (VIEL…RGTV), 56–76 (PLLI…ANTL), 105–125 (HALI…WSTT), 128–148 (LSAH…TLLL), 152–172 (TSQN…IGWS), 173–193 (AVTG…FFWT), 237–257 (VLAT…VAIL), and 291–311 (YLAV…PTLL).

This sequence belongs to the UbiA prenyltransferase family. Protoheme IX farnesyltransferase subfamily.

It localises to the cell membrane. The catalysed reaction is heme b + (2E,6E)-farnesyl diphosphate + H2O = Fe(II)-heme o + diphosphate. Its pathway is porphyrin-containing compound metabolism; heme O biosynthesis; heme O from protoheme: step 1/1. In terms of biological role, converts heme B (protoheme IX) to heme O by substitution of the vinyl group on carbon 2 of heme B porphyrin ring with a hydroxyethyl farnesyl side group. This is Protoheme IX farnesyltransferase from Mycolicibacterium gilvum (strain PYR-GCK) (Mycobacterium gilvum (strain PYR-GCK)).